Consider the following 185-residue polypeptide: uncharacterized protein (185 aa).

Transmembrane regions (helical) follow at residues 9–29, 72–92, and 111–131; these read LVAA…WAFL, VLFF…ILIV, and FFFI…IPFL.

It localises to the cell membrane. This is an uncharacterized protein from Bacillus subtilis (strain 168).